We begin with the raw amino-acid sequence, 732 residues long: Myosin heavy chain kinase B (732 aa).

The region spanning 124 to 328 is the Alpha-type protein kinase domain; sequence DPYTTTAQWT…ICQYLNLQSI (205 aa). ATP is bound at residue 298–303; sequence GIGNLG. The segment at 331–428 is disordered; the sequence is KSEKSDCGTV…TNKERSKSKS (98 aa). The segment covering 356–394 has biased composition (low complexity); sequence NNNNNNNNNNNNNNNNNNSNNNNNNNSSISKSLVEISSG. Basic and acidic residues predominate over residues 395–404; it reads SKERNDRDSP. The segment covering 405–419 has biased composition (polar residues); it reads SRQLFVSNDGNTLNT. WD repeat units lie at residues 458–486, 500–528, 540–568, 580–608, 620–648, 660–688, and 700–730; these read KGYHVTSHLCICDNLLFTGCSDNSIRVYD, GHEGPVESICYNDQYLFSGSSDHSIKVWD, GHDKPVHTVLLNDKYLFSGSSDKTIKVWD, SHARAVKTLCISGQYLFSGSNDKTIKVWD, GHTKWVTTICILGTNLYSGSYDKTIRVWN, GHDRWVEHMVICDKLLFTASDDNTIKIWD, and GHNATVQCLAVWEDKKCVISCSHDQSIRVWG.

It belongs to the protein kinase superfamily. Alpha-type protein kinase family. ALPK subfamily.

The enzyme catalyses L-threonyl-[myosin heavy-chain] + ATP = O-phospho-L-threonyl-[myosin heavy-chain] + ADP + H(+). Its function is as follows. Catalyzes its autophosphorylation, which is needed for enzymatic activity and phosphorylates myosin II heavy chain at a threonine in the C-terminal tail region. This phosphorylation is critical in regulating the assembly and disassembly of myosin II filament. Participates in control of myosin localization. This is Myosin heavy chain kinase B (mhkB) from Dictyostelium discoideum (Social amoeba).